The sequence spans 159 residues: Serine-protein kinase RsbW (159 aa).

The protein belongs to the anti-sigma-factor family.

It catalyses the reaction L-seryl-[protein] + ATP = O-phospho-L-seryl-[protein] + ADP + H(+). The catalysed reaction is L-threonyl-[protein] + ATP = O-phospho-L-threonyl-[protein] + ADP + H(+). Its function is as follows. Negative regulator of sigma-B activity. Phosphorylates and inactivates its specific antagonist protein, RsbV. Upon phosphorylation of RsbV, RsbW is released and binds to sigma-B, thereby blocking its ability to form an RNA polymerase holoenzyme (E-sigma-B). The polypeptide is Serine-protein kinase RsbW (Staphylococcus epidermidis).